The sequence spans 518 residues: Probable bifunctional methylthioribulose-1-phosphate dehydratase/enolase-phosphatase E1 (518 aa).

The methylthioribulose-1-phosphate dehydratase stretch occupies residues 1–247 (MAAAPPAVAV…AIKLHQIGLD (247 aa)). Residue cysteine 119 participates in substrate binding. Positions 137 and 139 each coordinate Zn(2+). Glutamate 162 acts as the Proton donor/acceptor; for methylthioribulose-1-phosphate dehydratase activity in catalysis. Residue histidine 212 participates in Zn(2+) binding. The segment at 279 to 518 (IVLDIEGTTT…FKTITSFAEI (240 aa)) is enolase-phosphatase E1. Mg(2+) contacts are provided by aspartate 282 and glutamate 284. Substrate contacts are provided by residues 417–418 (SS) and lysine 451. A Mg(2+)-binding site is contributed by aspartate 477.

This sequence in the N-terminal section; belongs to the aldolase class II family. MtnB subfamily. In the C-terminal section; belongs to the HAD-like hydrolase superfamily. MasA/MtnC family. Requires Zn(2+) as cofactor. Mg(2+) is required as a cofactor.

The enzyme catalyses 5-(methylsulfanyl)-D-ribulose 1-phosphate = 5-methylsulfanyl-2,3-dioxopentyl phosphate + H2O. It catalyses the reaction 5-methylsulfanyl-2,3-dioxopentyl phosphate + H2O = 1,2-dihydroxy-5-(methylsulfanyl)pent-1-en-3-one + phosphate. Its pathway is amino-acid biosynthesis; L-methionine biosynthesis via salvage pathway; L-methionine from S-methyl-5-thio-alpha-D-ribose 1-phosphate: step 2/6. It participates in amino-acid biosynthesis; L-methionine biosynthesis via salvage pathway; L-methionine from S-methyl-5-thio-alpha-D-ribose 1-phosphate: step 3/6. The protein operates within amino-acid biosynthesis; L-methionine biosynthesis via salvage pathway; L-methionine from S-methyl-5-thio-alpha-D-ribose 1-phosphate: step 4/6. In Populus trichocarpa (Western balsam poplar), this protein is Probable bifunctional methylthioribulose-1-phosphate dehydratase/enolase-phosphatase E1.